Consider the following 180-residue polypeptide: Alkyl hydroperoxide reductase AhpD (180 aa).

Cysteine 131 acts as the Proton donor in catalysis. The cysteines at positions 131 and 134 are disulfide-linked. The active-site Cysteine sulfenic acid (-SOH) intermediate is the cysteine 134.

The protein belongs to the AhpD family.

The enzyme catalyses N(6)-[(R)-dihydrolipoyl]-L-lysyl-[lipoyl-carrier protein] + a hydroperoxide = N(6)-[(R)-lipoyl]-L-lysyl-[lipoyl-carrier protein] + an alcohol + H2O. Functionally, antioxidant protein with alkyl hydroperoxidase activity. Required for the reduction of the AhpC active site cysteine residues and for the regeneration of the AhpC enzyme activity. The sequence is that of Alkyl hydroperoxide reductase AhpD from Hyphomonas neptunium (strain ATCC 15444).